A 265-amino-acid polypeptide reads, in one-letter code: Protein synthesis inhibitor PD-S2 (265 aa).

2 cysteine pairs are disulfide-bonded: C34-C262 and C88-C110. The N-linked (GlcNAc...) asparagine glycan is linked to N120.

Belongs to the ribosome-inactivating protein family. Type 1 RIP subfamily. In terms of processing, glycosylated. As to expression, seeds.

The enzyme catalyses Endohydrolysis of the N-glycosidic bond at one specific adenosine on the 28S rRNA.. In terms of biological role, inhibits protein synthesis in animal cells. Useful as immunotoxin for pharmacological applications. This chain is Protein synthesis inhibitor PD-S2, found in Phytolacca dioica (Bella sombra tree).